The chain runs to 228 residues: Urease accessory protein UreF (228 aa).

The protein belongs to the UreF family. UreD, UreF and UreG form a complex that acts as a GTP-hydrolysis-dependent molecular chaperone, activating the urease apoprotein by helping to assemble the nickel containing metallocenter of UreC. The UreE protein probably delivers the nickel.

It is found in the cytoplasm. Its function is as follows. Required for maturation of urease via the functional incorporation of the urease nickel metallocenter. In Prochlorococcus marinus (strain MIT 9215), this protein is Urease accessory protein UreF.